The chain runs to 322 residues: Malate dehydrogenase (322 aa).

Residues 10–15 (GSGQIG) and aspartate 34 each bind NAD(+). Residues arginine 83 and arginine 89 each contribute to the substrate site. NAD(+)-binding positions include asparagine 96 and 119 to 121 (ITN). Asparagine 121 and arginine 152 together coordinate substrate. The active-site Proton acceptor is the histidine 176.

This sequence belongs to the LDH/MDH superfamily. MDH type 3 family.

It carries out the reaction (S)-malate + NAD(+) = oxaloacetate + NADH + H(+). In terms of biological role, catalyzes the reversible oxidation of malate to oxaloacetate. In Bradyrhizobium diazoefficiens (strain JCM 10833 / BCRC 13528 / IAM 13628 / NBRC 14792 / USDA 110), this protein is Malate dehydrogenase.